Consider the following 620-residue polypeptide: Protein NRT1/ PTR FAMILY 2.13 (620 aa).

The interval 1 to 32 (MVLEDRKDGSSLPGRSGSFSKSSPSELDVVDP) is disordered. Residues 10-25 (SSLPGRSGSFSKSSPS) are compositionally biased toward low complexity. Transmembrane regions (helical) follow at residues 70 to 90 (LGSI…FHLE), 95 to 115 (ANVI…GAYI), 126 to 146 (IAFA…TASF), 167 to 187 (KLQI…SGGI), 213 to 233 (FFNW…TVVV), 241 to 261 (WIIG…MFFA), 364 to 384 (IVPI…QGTF), 402 to 422 (IPAG…LPFY), 443 to 463 (LQRI…AGIV), 485 to 505 (VFWL…NIIG), 524 to 544 (SLFS…VTVV), and 568 to 588 (YFYY…WYCA).

This sequence belongs to the major facilitator superfamily. Proton-dependent oligopeptide transporter (POT/PTR) (TC 2.A.17) family. Interacts with NLA. Ubiquitinated by NLA. Ubiquitination of NPF2.13 leads to its degradation by the proteasome. As to expression, expressed in leaves and flowers. Detected in stems and siliques. Highest expression in the distal lamina of older leaves. Restricted to the sieve element and companion cell complex of the minor vein.

Its subcellular location is the cell membrane. Functionally, low-affinity proton-dependent nitrate transporter. Not involved in dipeptides transport, but has a weak glucosinolate transport activity. Involved in phloem loading and nitrate remobilization from the older leaves to other tissues. The protein is Protein NRT1/ PTR FAMILY 2.13 (NPF2.13) of Arabidopsis thaliana (Mouse-ear cress).